The following is a 348-amino-acid chain: Dihydroorotase (348 aa).

Zn(2+) is bound by residues His17 and His19. Substrate-binding positions include 19–21 and Asn45; that span reads HLR. The Zn(2+) site is built by Lys103, His140, and His178. Position 103 is an N6-carboxylysine (Lys103). His140 is a binding site for substrate. Substrate is bound at residue Leu223. Asp251 is a binding site for Zn(2+). Asp251 is an active-site residue. Positions 255 and 267 each coordinate substrate.

This sequence belongs to the metallo-dependent hydrolases superfamily. DHOase family. Class II DHOase subfamily. As to quaternary structure, homodimer. Zn(2+) is required as a cofactor.

The catalysed reaction is (S)-dihydroorotate + H2O = N-carbamoyl-L-aspartate + H(+). It functions in the pathway pyrimidine metabolism; UMP biosynthesis via de novo pathway; (S)-dihydroorotate from bicarbonate: step 3/3. Its function is as follows. Catalyzes the reversible cyclization of carbamoyl aspartate to dihydroorotate. This is Dihydroorotase from Shigella boydii serotype 18 (strain CDC 3083-94 / BS512).